A 315-amino-acid chain; its full sequence is Olfactory receptor 10A4 (315 aa).

The Extracellular segment spans residues 1-26 (MMWENWTIVSEFVLVSFSALSTELQA). N-linked (GlcNAc...) asparagine glycosylation occurs at N5. Residues 27 to 47 (LLFLLFLTIYLVTLMGNVLII) traverse the membrane as a helical segment. At 48-55 (LVTIADSA) the chain is on the cytoplasmic side. Residues 56-76 (LQSPMYFFLRNLSFLEIGFNL) form a helical membrane-spanning segment. Residues 77 to 100 (VIVPKMLGTLIIQDTTISFLGCAT) lie on the Extracellular side of the membrane. A disulfide bond links C98 and C190. Residues 101–121 (QMYFFFFFGAAECCLLATMAY) traverse the membrane as a helical segment. Residues 122–140 (DRYVAICDPLHYPVIMGHI) lie on the Cytoplasmic side of the membrane. Residues 141–161 (SCAQLAAASWFSGFSVATVQT) form a helical membrane-spanning segment. Residues 162–198 (TWIFSFPFCGPNRVNHFFCDSPPVIALVCADTSVFEL) lie on the Extracellular side of the membrane. A helical transmembrane segment spans residues 199-218 (EALTATVLFILFPFLLILGS). Residues 219-238 (YVRILSTIFRMPSAEGKHQA) are Cytoplasmic-facing. A helical membrane pass occupies residues 239–259 (FSTCSAHLLVVSLFYSTAILT). The Extracellular portion of the chain corresponds to 260–272 (YFRPQSSASSESK). Residues 273–293 (KLLSLSSTVVTPMLNPIIYSS) traverse the membrane as a helical segment. The Cytoplasmic segment spans residues 294-315 (RNKEVKAALKRLIHRTLGSQKL).

It belongs to the G-protein coupled receptor 1 family. In terms of tissue distribution, expressed in the tongue.

The protein localises to the cell membrane. Functionally, odorant receptor (Potential). May be involved in taste perception. In Homo sapiens (Human), this protein is Olfactory receptor 10A4 (OR10A4).